The chain runs to 90 residues: Putative defensin-like protein 64 (90 aa).

Residues methionine 1–threonine 23 form the signal peptide. Disulfide bonds link cysteine 33/cysteine 56 and cysteine 42/cysteine 77.

It belongs to the DEFL family.

Its subcellular location is the secreted. This is Putative defensin-like protein 64 from Arabidopsis thaliana (Mouse-ear cress).